The chain runs to 160 residues: Small ribosomal subunit protein uS9 (160 aa).

This sequence belongs to the universal ribosomal protein uS9 family.

This Cereibacter sphaeroides (strain ATCC 17029 / ATH 2.4.9) (Rhodobacter sphaeroides) protein is Small ribosomal subunit protein uS9.